Here is a 306-residue protein sequence, read N- to C-terminus: Ethylmalonyl-CoA decarboxylase (306 aa).

The residue at position 216 (K216) is an N6-acetyllysine; alternate. K216 bears the N6-succinyllysine; alternate mark.

It belongs to the enoyl-CoA hydratase/isomerase family.

The protein resides in the cytoplasm. Its subcellular location is the cytosol. It catalyses the reaction (2S)-ethylmalonyl-CoA + H(+) = butanoyl-CoA + CO2. It carries out the reaction (S)-methylmalonyl-CoA + H(+) = propanoyl-CoA + CO2. The enzyme catalyses (2R)-ethylmalonyl-CoA + H(+) = butanoyl-CoA + CO2. In terms of biological role, decarboxylates ethylmalonyl-CoA, a potentially toxic metabolite, to form butyryl-CoA, suggesting it might be involved in metabolite proofreading. Acts preferentially on (S)-ethylmalonyl-CoA but also has some activity on the (R)-isomer. Also has methylmalonyl-CoA decarboxylase activity at lower level. The protein is Ethylmalonyl-CoA decarboxylase (ECHDC1) of Bos taurus (Bovine).